The chain runs to 49 residues: Cytochrome b559 subunit beta (49 aa).

Residues 24–40 (WLAVHVLGVPTVFFLGA) form a helical membrane-spanning segment. H28 lines the heme pocket.

The protein belongs to the PsbE/PsbF family. Heterodimer of an alpha subunit and a beta subunit. PSII is composed of 1 copy each of membrane proteins PsbA, PsbB, PsbC, PsbD, PsbE, PsbF, PsbH, PsbI, PsbJ, PsbK, PsbL, PsbM, PsbT, PsbX, PsbY, Psb30/Ycf12, peripheral proteins PsbO, CyanoQ (PsbQ), PsbU, PsbV and a large number of cofactors. It forms dimeric complexes. Heme b serves as cofactor.

The protein localises to the cellular thylakoid membrane. In terms of biological role, this b-type cytochrome is tightly associated with the reaction center of photosystem II (PSII). PSII is a light-driven water:plastoquinone oxidoreductase that uses light energy to abstract electrons from H(2)O, generating O(2) and a proton gradient subsequently used for ATP formation. It consists of a core antenna complex that captures photons, and an electron transfer chain that converts photonic excitation into a charge separation. The protein is Cytochrome b559 subunit beta of Prochlorococcus marinus (strain MIT 9303).